Reading from the N-terminus, the 72-residue chain is Translation initiation factor IF-1 (72 aa).

Residues 1 to 72 form the S1-like domain; that stretch reads MAKEDCIEME…TKGRIKFRSK (72 aa).

The protein belongs to the IF-1 family. In terms of assembly, component of the 30S ribosomal translation pre-initiation complex which assembles on the 30S ribosome in the order IF-2 and IF-3, IF-1 and N-formylmethionyl-tRNA(fMet); mRNA recruitment can occur at any time during PIC assembly.

The protein localises to the cytoplasm. Functionally, one of the essential components for the initiation of protein synthesis. Stabilizes the binding of IF-2 and IF-3 on the 30S subunit to which N-formylmethionyl-tRNA(fMet) subsequently binds. Helps modulate mRNA selection, yielding the 30S pre-initiation complex (PIC). Upon addition of the 50S ribosomal subunit IF-1, IF-2 and IF-3 are released leaving the mature 70S translation initiation complex. This is Translation initiation factor IF-1 from Francisella tularensis subsp. novicida (strain U112).